A 269-amino-acid chain; its full sequence is G-protein coupled receptor homolog C3 (269 aa).

A disulfide bridge links Cys28 with Cys107. A run of 5 helical transmembrane segments spans residues 30–50 (IMSV…TLMS), 71–91 (IGIL…SPVS), 123–143 (LMQI…FVYC), 165–185 (IVLM…IVLM), and 200–220 (HLCL…ISLA).

It belongs to the G-protein coupled receptor 1 family.

The protein resides in the host cell membrane. This is G-protein coupled receptor homolog C3 from Sus scrofa (Pig).